The primary structure comprises 185 residues: Ribosome-recycling factor (185 aa).

The protein belongs to the RRF family.

It localises to the cytoplasm. Functionally, responsible for the release of ribosomes from messenger RNA at the termination of protein biosynthesis. May increase the efficiency of translation by recycling ribosomes from one round of translation to another. The polypeptide is Ribosome-recycling factor (Pseudoalteromonas atlantica (strain T6c / ATCC BAA-1087)).